We begin with the raw amino-acid sequence, 1584 residues long: Dicer-like protein 1 (1584 aa).

Positions 31–60 are disordered; it reads EDVVSDNDDRGNASDVESEDGVKRWTVNPE. The 182-residue stretch at 129 to 310 folds into the Helicase ATP-binding domain; the sequence is LFERAKQQNT…RAAAELEALL (182 aa). 142-149 is a binding site for ATP; it reads LDTGSGKT. Positions 255–258 match the DEAH box motif; sequence DEAH. The Helicase C-terminal domain occupies 448-621; it reads KVIMLVRILR…EALPEDRKLT (174 aa). Residues 654-744 enclose the Dicer dsRNA-binding fold domain; that stretch reads SLVCLANFTA…QSVFTKQLPE (91 aa). Residues 894–1028 form the PAZ domain; it reads KALAYVSENE…LILEPMRISP (135 aa). 2 consecutive RNase III domains span residues 1052 to 1207 and 1258 to 1424; these read VALD…LTGQ and AKKF…VDSE. Mg(2+) contacts are provided by E1298, D1410, and E1413. A DRBM domain is found at 1458 to 1545; sequence TFVANMMAHK…AKKAIKLLEG (88 aa). Residues C1470, H1516, C1557, and C1559 each contribute to the Zn(2+) site.

It belongs to the helicase family. Dicer subfamily. It depends on Mg(2+) as a cofactor. Mn(2+) is required as a cofactor.

Functionally, dicer-like endonuclease involved in cleaving double-stranded RNA in the RNA interference (RNAi) pathway. Produces 21 to 25 bp dsRNAs (siRNAs) which target the selective destruction of homologous RNAs leading to sequence-specific suppression of gene expression, called post-transcriptional gene silencing (PTGS). Part of a broad host defense response against viral infection and transposons. Controls the expression of the non-LTR retrotransposon Tad in the African strain, Adiomopoume. This is Dicer-like protein 1 (dcl-1) from Neurospora crassa (strain ATCC 24698 / 74-OR23-1A / CBS 708.71 / DSM 1257 / FGSC 987).